The chain runs to 227 residues: Paired immunoglobulin-like type 2 receptor beta (227 aa).

The first 19 residues, 1-19, serve as a signal peptide directing secretion; it reads MGRPLLLPLLLLLQPPAFL. Residues 20 to 191 are Extracellular-facing; sequence QPGGSTGSGP…WHLSLDTAIR (172 aa). The Ig-like V-type domain occupies 21–143; that stretch reads PGGSTGSGPS…SGRQQLQSIK (123 aa). A glycan (N-linked (GlcNAc...) asparagine) is linked at Asn100. The chain crosses the membrane as a helical span at residues 192–212; sequence VALAVAVLKTVILGLLCLLLL. Over 213–227 the chain is Cytoplasmic; sequence WWRRRKGSRAPSSDF.

Its subcellular location is the membrane. Its function is as follows. Paired receptors consist of highly related activating and inhibitory receptors and are widely involved in the regulation of the immune system. PILRB is thought to act as a cellular signaling activating receptor that associates with ITAM-bearing adapter molecules on the cell surface. This is Paired immunoglobulin-like type 2 receptor beta (PILRB) from Homo sapiens (Human).